A 199-amino-acid chain; its full sequence is Recombination protein RecR (199 aa).

Residues 58–73 (CRRCFNLTEGEECDIC) form a C4-type zinc finger. The region spanning 81–176 (SVICVVEDPY…RVTALASGLP (96 aa)) is the Toprim domain.

This sequence belongs to the RecR family.

May play a role in DNA repair. It seems to be involved in an RecBC-independent recombinational process of DNA repair. It may act with RecF and RecO. The polypeptide is Recombination protein RecR (Rubrobacter xylanophilus (strain DSM 9941 / JCM 11954 / NBRC 16129 / PRD-1)).